The primary structure comprises 492 residues: Ketol-acid reductoisomerase (NADP(+)) (492 aa).

A KARI N-terminal Rossmann domain is found at 14–208 (LDQLGRCRFM…GGHKAGVLES (195 aa)). Residues 45 to 48 (CGAQ), arginine 68, arginine 76, serine 78, and 108 to 110 (DKQ) contribute to the NADP(+) site. The active site involves histidine 132. An NADP(+)-binding site is contributed by glycine 158. KARI C-terminal knotted domains lie at 209 to 344 (SFVA…NAPK) and 345 to 485 (YDGK…MTDM). Mg(2+) is bound by residues aspartate 217, glutamate 221, glutamate 389, and glutamate 393. Substrate is bound at residue serine 414.

The protein belongs to the ketol-acid reductoisomerase family. Mg(2+) serves as cofactor.

It carries out the reaction (2R)-2,3-dihydroxy-3-methylbutanoate + NADP(+) = (2S)-2-acetolactate + NADPH + H(+). The enzyme catalyses (2R,3R)-2,3-dihydroxy-3-methylpentanoate + NADP(+) = (S)-2-ethyl-2-hydroxy-3-oxobutanoate + NADPH + H(+). It participates in amino-acid biosynthesis; L-isoleucine biosynthesis; L-isoleucine from 2-oxobutanoate: step 2/4. Its pathway is amino-acid biosynthesis; L-valine biosynthesis; L-valine from pyruvate: step 2/4. Involved in the biosynthesis of branched-chain amino acids (BCAA). Catalyzes an alkyl-migration followed by a ketol-acid reduction of (S)-2-acetolactate (S2AL) to yield (R)-2,3-dihydroxy-isovalerate. In the isomerase reaction, S2AL is rearranged via a Mg-dependent methyl migration to produce 3-hydroxy-3-methyl-2-ketobutyrate (HMKB). In the reductase reaction, this 2-ketoacid undergoes a metal-dependent reduction by NADPH to yield (R)-2,3-dihydroxy-isovalerate. This chain is Ketol-acid reductoisomerase (NADP(+)), found in Haemophilus influenzae (strain PittEE).